A 661-amino-acid chain; its full sequence is Arginine--tRNA ligase, cytoplasmic (661 aa).

M1 bears the N-acetylmethionine mark. The interval 1 to 73 is could be involved in the assembly of the multisynthetase complex; it reads MDGLVAQCSA…AEKRRRPTKN (73 aa). Residues 201–203, H212, Y385, D389, and Q413 each bind L-arginine; that span reads SPN. The short motif at 202–213 is the 'HIGH' region element; it reads PNIAKEMHVGHL. An interaction with tRNA region spans residues 530 to 544; sequence NTAAYLLYAFTRIRS.

The protein belongs to the class-I aminoacyl-tRNA synthetase family. As to quaternary structure, interacts (via N-terminus) with AIMP1 (via N-terminus); this stimulates its catalytic activity. Interacts (via N-terminus) with LARS2 (via C-terminus). Monomer. Part of a multisubunit complex that groups tRNA ligases for Arg (RARS1), Asp (DARS1), Gln (QARS1), Ile (IARS1), Leu (LARS1), Lys (KARS1), Met (MARS1) the bifunctional ligase for Glu and Pro (EPRS1) and the auxiliary subunits AIMP1/p43, AIMP2/p38 and EEF1E1/p18. Interacts with QARS1. Part of a complex composed of RARS1, QARS1 and AIMP1.

The protein resides in the cytoplasm. Its subcellular location is the cytosol. The enzyme catalyses tRNA(Arg) + L-arginine + ATP = L-arginyl-tRNA(Arg) + AMP + diphosphate. Forms part of a macromolecular complex that catalyzes the attachment of specific amino acids to cognate tRNAs during protein synthesis. Modulates the secretion of AIMP1 and may be involved in generation of the inflammatory cytokine EMAP2 from AIMP1. In Cricetulus griseus (Chinese hamster), this protein is Arginine--tRNA ligase, cytoplasmic (RARS1).